We begin with the raw amino-acid sequence, 382 residues long: Guanylate kinase 1 (382 aa).

One can recognise a Guanylate kinase-like domain in the interval 128–310 (QKPIVISGPS…CYENLKKLLS (183 aa)). Residue 135 to 142 (GPSGVGKG) coordinates ATP. Active-site residues include Arg168, Arg261, and Arg272. ATP is bound by residues Asn295 and Asp296.

This sequence belongs to the guanylate kinase family. As to quaternary structure, monomer.

Its subcellular location is the cytoplasm. It localises to the nucleus. The catalysed reaction is GMP + ATP = GDP + ADP. Its function is as follows. Essential for recycling GMP and indirectly, cGMP. This chain is Guanylate kinase 1 (GK1), found in Oryza sativa subsp. japonica (Rice).